A 1341-amino-acid chain; its full sequence is WASH complex subunit 2A (1341 aa).

The tract at residues 1–220 (MMNRTTPDQE…VGSDRGSIVD (220 aa)) is sufficient for interaction with WASHC3, WASHC4 and WASHC5; required for interaction with WASHC1. Low complexity predominate over residues 202–214 (GELSSEEGSVGSD). The tract at residues 202-405 (GELSSEEGSV…SSSKPGKKIP (204 aa)) is disordered. Residues 220 to 232 (DTEEEKEEEESDE) show a composition bias toward acidic residues. Basic and acidic residues predominate over residues 233–244 (DFAHHSDNEQNR). 2 stretches are compositionally biased toward acidic residues: residues 250–259 (SDEEEDDDGC) and 266–276 (EKEEEDIEDIE). Basic and acidic residues predominate over residues 293–307 (LAARIKGDAVGRVDE). A compositionally biased stretch (gly residues) spans 355–366 (GSGGGLFSGGKG). Residues 356–600 (SGGGLFSGGK…QTLCLQAQRE (245 aa)) form a sufficient for interaction with CCDC93 region. Positions 356–742 (SGGGLFSGGK…KEAQLGVKSV (387 aa)) are required for interaction with CCDC22 and VPS35L. The tract at residues 357 to 1341 (GGGLFSGGKG…DDPLNAFGGQ (985 aa)) is interaction with VPS35. 4 short sequence motifs (LFa) span residues 367–378 (LFDDEDEESDLF), 411–419 (VFLGDTDVF), 450–463 (LFDD…DDFF), and 482–491 (IFGDEEGDLF). The disordered stretch occupies residues 422–554 (ASVPSMKEPQ…EDLFSSQSAS (133 aa)). The span at 451-462 (FDDDDGDDDDDF) shows a compositional bias: acidic residues. A compositionally biased stretch (basic and acidic residues) spans 507–517 (DENKARAEKKV). Residues 518–536 (TLSSSKNLKPSSETKTQKG) show a composition bias toward polar residues. 3 short sequence motifs (LFa) span residues 537-548 (LFSDEEDSEDLF), 572-583 (LFDDEDEEDNLF), and 617-629 (LFSS…WNIP). The residue at position 539 (serine 539) is a Phosphoserine. Disordered stretches follow at residues 621-664 (DEED…KTSL), 696-739 (DSGG…QLGV), and 751-838 (ESLK…KSTG). Residues 637–647 (SDSRSKGEPRD) show a composition bias toward basic and acidic residues. Short sequence motifs (LFa) lie at residues 664–674 (LFEEDEEDDLF), 690–702 (LFED…GSLF), and 726–738 (LFSD…AQLG). Positions 751-768 (ESLKFGRTDVAESEKEGL) are enriched in basic and acidic residues. The LFa 11 motif lies at 803 to 817 (LFDEEEDKMEDQNII). Basic and acidic residues predominate over residues 823-834 (EVGKGRDPDAHP). 3 consecutive short sequence motifs (LFa) follow at residues 839–847 (VFQDEELLF), 856–862 (DPDVDLF), and 878–888 (LFGDDEDDDLF). Disordered stretches follow at residues 881 to 951 (DDED…KEPS) and 988 to 1205 (FPSS…LEDE). Composition is skewed to basic and acidic residues over residues 898-911 (QEKK…HSVD) and 917-931 (KHPE…KGIW). Residues 937–1341 (QDSSGLAPFK…DDPLNAFGGQ (405 aa)) are interaction with phospholipids. Residues 1028 to 1046 (NKSRVKMRGKRRPQTRAAR) show a composition bias toward basic residues. The segment at 1029 to 1047 (KSRVKMRGKRRPQTRAARR) is required for interaction with F-actin-capping protein subunit alpha (CAPZA1 or CAPZA2 or CAPZA3). Serine 1054 and serine 1087 each carry phosphoserine. Positions 1094-1110 (EALAAAAAPWEGGPVPG) are enriched in low complexity. Serine 1114 is modified (phosphoserine). 6 short sequence motifs (LFa) span residues 1129 to 1136 (LFDSGDIF), 1171 to 1185 (MFPA…DDLF), 1201 to 1209 (LLEDEDDLF), 1234 to 1240 (IFEDDIF), 1262 to 1270 (LFDDNIDIF), and 1290 to 1299 (IFDDDMDDIF). Residues 1135–1145 (IFSTGTGSQSV) are compositionally biased toward polar residues. A disordered region spans residues 1302–1326 (GIQAKTTKPKSRSAQAAPEPRFEHK). The short motif at 1330 to 1338 (IFDDPLNAF) is the LFa 21 element.

It belongs to the FAM21 family. As to quaternary structure, component of the WASH core complex also described as WASH regulatory complex (SHRC) composed of WASH (WASHC1, WASH2P or WASH3P), WASHC2 (WASHC2A or WASHC2C), WASHC3, WASHC4 and WASHC5; in the complex interacts (via N-terminus) directly with WASHC1. The WASH core complex associates with the F-actin-capping protein dimer (formed by CAPZA1, CAPZA2 or CAPZA3 and CAPZB) in a transient or substoichiometric manner which was initially described as WASH complex. Interacts with VPS35; mediates the association with the retromer CSC complex. Interacts with FKBP15. Interacts with CCDC93, CCDC22, VPS35L; indicative for an association of the WASH core complex with the CCC and retriever complexes. Directly interacts with TBC1D23.

The protein localises to the early endosome membrane. The protein resides in the cell membrane. Functionally, acts at least in part as component of the WASH core complex whose assembly at the surface of endosomes inhibits WASH nucleation-promoting factor (NPF) activity in recruiting and activating the Arp2/3 complex to induce actin polymerization and is involved in the fission of tubules that serve as transport intermediates during endosome sorting. Mediates the recruitment of the WASH core complex to endosome membranes via binding to phospholipids and VPS35 of the retromer CSC. Mediates the recruitment of the F-actin-capping protein dimer to the WASH core complex probably promoting localized F-actin polymerization needed for vesicle scission. Via its C-terminus binds various phospholipids, most strongly phosphatidylinositol 4-phosphate (PtdIns-(4)P), phosphatidylinositol 5-phosphate (PtdIns-(5)P) and phosphatidylinositol 3,5-bisphosphate (PtdIns-(3,5)P2). Involved in the endosome-to-plasma membrane trafficking and recycling of SNX27-retromer-dependent cargo proteins, such as GLUT1. Required for the association of DNAJC13, ENTR1, ANKRD50 with retromer CSC subunit VPS35. Required for the endosomal recruitment of CCC complex subunits COMMD1 and CCDC93 as well as the retriever complex subunit VPS35L. The polypeptide is WASH complex subunit 2A (Homo sapiens (Human)).